We begin with the raw amino-acid sequence, 389 residues long: Choline/ethanolaminephosphotransferase 2 (389 aa).

A run of 8 helical transmembrane segments spans residues 49 to 69, 141 to 161, 176 to 196, 220 to 240, 252 to 272, 286 to 306, 321 to 338, and 350 to 370; these read MITLMGFMFLLTSALLGYIYS, TFWFWVISAVPFFGATWEHYF, GLALIYCGHFFTAIVGAEWWA, IILFSMIFFAVIPTLAINTSN, MLLALAMLYPLVTLIAGVLIW, HLVVLGTGLAFGFLVGRMILA, MSLLYLPFALANALTARL, and VLLGYCIFTLSLYAHFATSVI.

This sequence belongs to the CDP-alcohol phosphatidyltransferase class-I family. Mg(2+) serves as cofactor. Requires Mn(2+) as cofactor.

It is found in the membrane. The enzyme catalyses CDP-ethanolamine + a 1,2-diacyl-sn-glycerol = a 1,2-diacyl-sn-glycero-3-phosphoethanolamine + CMP + H(+). The catalysed reaction is CDP-choline + a 1,2-diacyl-sn-glycerol = a 1,2-diacyl-sn-glycero-3-phosphocholine + CMP + H(+). Its pathway is phospholipid metabolism; phosphatidylethanolamine biosynthesis; phosphatidylethanolamine from ethanolamine: step 3/3. The protein operates within phospholipid metabolism; phosphatidylcholine biosynthesis; phosphatidylcholine from phosphocholine: step 2/2. In terms of biological role, catalyzes both phosphatidylcholine and phosphatidylethanolamine biosynthesis from CDP-choline and CDP-ethanolamine, respectively. Has a higher cholinephosphotransferase activity than ethanolaminephosphotransferase activity. The protein is Choline/ethanolaminephosphotransferase 2 (AAPT2) of Arabidopsis thaliana (Mouse-ear cress).